A 354-amino-acid polypeptide reads, in one-letter code: tRNA N6-adenosine threonylcarbamoyltransferase (354 aa).

His-115 and His-119 together coordinate Fe cation. Substrate-binding positions include 138–142 (LVSGG), Asp-171, Gly-184, and Asn-276. Asp-304 is a binding site for Fe cation.

The protein belongs to the KAE1 / TsaD family. It depends on Fe(2+) as a cofactor.

The protein resides in the cytoplasm. It carries out the reaction L-threonylcarbamoyladenylate + adenosine(37) in tRNA = N(6)-L-threonylcarbamoyladenosine(37) in tRNA + AMP + H(+). In terms of biological role, required for the formation of a threonylcarbamoyl group on adenosine at position 37 (t(6)A37) in tRNAs that read codons beginning with adenine. Is involved in the transfer of the threonylcarbamoyl moiety of threonylcarbamoyl-AMP (TC-AMP) to the N6 group of A37, together with TsaE and TsaB. TsaD likely plays a direct catalytic role in this reaction. In Xanthomonas campestris pv. campestris (strain 8004), this protein is tRNA N6-adenosine threonylcarbamoyltransferase.